The sequence spans 150 residues: Flagellar assembly factor FliW (150 aa).

The protein belongs to the FliW family. In terms of assembly, interacts with translational regulator CsrA and flagellin(s).

It localises to the cytoplasm. Functionally, acts as an anti-CsrA protein, binds CsrA and prevents it from repressing translation of its target genes, one of which is flagellin. Binds to flagellin and participates in the assembly of the flagellum. This chain is Flagellar assembly factor FliW, found in Leptospira borgpetersenii serovar Hardjo-bovis (strain JB197).